Here is a 411-residue protein sequence, read N- to C-terminus: CinA-like protein (411 aa).

Belongs to the CinA family.

In Dictyoglomus turgidum (strain DSM 6724 / Z-1310), this protein is CinA-like protein.